We begin with the raw amino-acid sequence, 284 residues long: Tropomyosin alpha-1 chain (284 aa).

An N-acetylmethionine modification is found at Met-1. The segment at 1-40 (MDAIKKKMQMLKLDKENALDRAEQAESDKKASEDRSKQLE) is disordered. Positions 1-284 (MDAIKKKMQM…DHALNDMTSI (284 aa)) form a coiled coil. The span at 12–40 (KLDKENALDRAEQAESDKKASEDRSKQLE) shows a compositional bias: basic and acidic residues.

As to quaternary structure, homodimer. Heterodimer of an alpha (TPM1, TPM3 or TPM4) and a beta (TPM2) chain.

It localises to the cytoplasm. The protein localises to the cytoskeleton. Binds to actin filaments in muscle and non-muscle cells. Plays a central role, in association with the troponin complex, in the calcium dependent regulation of vertebrate striated muscle contraction. Smooth muscle contraction is regulated by interaction with caldesmon. In non-muscle cells is implicated in stabilizing cytoskeleton actin filaments. The sequence is that of Tropomyosin alpha-1 chain from Chelon auratus (Golden grey mullet).